A 288-amino-acid polypeptide reads, in one-letter code: Phosphatidylserine decarboxylase proenzyme (288 aa).

Active-site charge relay system; for autoendoproteolytic cleavage activity residues include Asp-88, His-145, and Ser-248. Catalysis depends on Ser-248, which acts as the Schiff-base intermediate with substrate; via pyruvic acid; for decarboxylase activity. Ser-248 carries the post-translational modification Pyruvic acid (Ser); by autocatalysis.

This sequence belongs to the phosphatidylserine decarboxylase family. PSD-B subfamily. Prokaryotic type I sub-subfamily. In terms of assembly, heterodimer of a large membrane-associated beta subunit and a small pyruvoyl-containing alpha subunit. Pyruvate serves as cofactor. Post-translationally, is synthesized initially as an inactive proenzyme. Formation of the active enzyme involves a self-maturation process in which the active site pyruvoyl group is generated from an internal serine residue via an autocatalytic post-translational modification. Two non-identical subunits are generated from the proenzyme in this reaction, and the pyruvate is formed at the N-terminus of the alpha chain, which is derived from the carboxyl end of the proenzyme. The autoendoproteolytic cleavage occurs by a canonical serine protease mechanism, in which the side chain hydroxyl group of the serine supplies its oxygen atom to form the C-terminus of the beta chain, while the remainder of the serine residue undergoes an oxidative deamination to produce ammonia and the pyruvoyl prosthetic group on the alpha chain. During this reaction, the Ser that is part of the protease active site of the proenzyme becomes the pyruvoyl prosthetic group, which constitutes an essential element of the active site of the mature decarboxylase.

It localises to the cell membrane. The catalysed reaction is a 1,2-diacyl-sn-glycero-3-phospho-L-serine + H(+) = a 1,2-diacyl-sn-glycero-3-phosphoethanolamine + CO2. Its pathway is phospholipid metabolism; phosphatidylethanolamine biosynthesis; phosphatidylethanolamine from CDP-diacylglycerol: step 2/2. Its function is as follows. Catalyzes the formation of phosphatidylethanolamine (PtdEtn) from phosphatidylserine (PtdSer). This is Phosphatidylserine decarboxylase proenzyme from Azoarcus sp. (strain BH72).